The sequence spans 287 residues: Large ribosomal subunit protein uL2 (287 aa).

The segment at 221-287 (RGSVMNPCDH…SKRSRGGRDS (67 aa)) is disordered. Residues 258-287 (KTRKKNKPSNKLVVRRRRRISKRSRGGRDS) show a composition bias toward basic residues.

The protein belongs to the universal ribosomal protein uL2 family. Part of the 50S ribosomal subunit. Forms a bridge to the 30S subunit in the 70S ribosome.

In terms of biological role, one of the primary rRNA binding proteins. Required for association of the 30S and 50S subunits to form the 70S ribosome, for tRNA binding and peptide bond formation. It has been suggested to have peptidyltransferase activity; this is somewhat controversial. Makes several contacts with the 16S rRNA in the 70S ribosome. This Prochlorococcus marinus (strain MIT 9312) protein is Large ribosomal subunit protein uL2.